A 407-amino-acid polypeptide reads, in one-letter code: Histone-lysine N-methyltransferase SUV39H2 (407 aa).

The 59-residue stretch at 43-101 folds into the Chromo domain; that stretch reads YEVEYLCDYKVEEGKEYYLVKWKGWPESSNTWEPQKNLKCPKLLENFLSDKDEYLSRMK. One can recognise a Pre-SET domain in the interval 185–243; that stretch reads TGCECSDCPAEKCCPKEAGFILAYNKQKKLKIQPGLPIYECNSFCRCGPDCPNRIVQKG. Residues C187, C189, C192, C197, C198, C225, C229, C231, and C235 each contribute to the Zn(2+) site. In terms of domain architecture, SET spans 246–369; the sequence is YSLCIFRTNN…AGEELTFDYQ (124 aa). Residues 257–259, Y300, and 326–327 each bind S-adenosyl-L-methionine; these read RGW and NH. Residues C329, C395, C397, and C402 each contribute to the Zn(2+) site. The Post-SET domain occupies 391-407; the sequence is IRTVCKCGAVCCRGYLN.

The protein belongs to the class V-like SAM-binding methyltransferase superfamily. Histone-lysine methyltransferase family. Suvar3-9 subfamily.

It localises to the nucleus. Its subcellular location is the chromosome. The protein resides in the centromere. The catalysed reaction is L-lysyl(9)-[histone H3] + 3 S-adenosyl-L-methionine = N(6),N(6),N(6)-trimethyl-L-lysyl(9)-[histone H3] + 3 S-adenosyl-L-homocysteine + 3 H(+). Its function is as follows. Histone methyltransferase that specifically trimethylates 'Lys-9' of histone H3 using monomethylated H3 'Lys-9' as substrate. H3 'Lys-9' trimethylation represents a specific tag for epigenetic transcriptional repression by recruiting HP1 (CBX1, CBX3 and/or CBX5) proteins to methylated histones. Mainly functions in heterochromatin regions, thereby playing a central role in the establishment of constitutive heterochromatin at pericentric and telomere regions. H3 'Lys-9' trimethylation is also required to direct DNA methylation at pericentric repeats. SUV39H1 is targeted to histone H3 via its interaction with RB1 and is involved in many processes. The sequence is that of Histone-lysine N-methyltransferase SUV39H2 (SUV39H2) from Gallus gallus (Chicken).